The following is a 243-amino-acid chain: UPF0246 protein SUB1767 (243 aa).

This sequence belongs to the UPF0246 family.

This is UPF0246 protein SUB1767 from Streptococcus uberis (strain ATCC BAA-854 / 0140J).